The following is a 288-amino-acid chain: 18S rRNA aminocarboxypropyltransferase (288 aa).

Positions 43, 91, 114, and 129 each coordinate S-adenosyl-L-methionine. Residues 209–221 (IWSAGNLNHKPTL) show a composition bias toward polar residues. A disordered region spans residues 209 to 267 (IWSAGNLNHKPTLNTSSTHSNSEESRSPLHEPSEASLAHDEHSIPTDDNEETLTNLQAN). The span at 229-253 (NSEESRSPLHEPSEASLAHDEHSIP) shows a compositional bias: basic and acidic residues.

The protein belongs to the TDD superfamily. TSR3 family.

Its subcellular location is the cytoplasm. The protein resides in the nucleus. It catalyses the reaction an N(1)-methylpseudouridine in rRNA + S-adenosyl-L-methionine = N(1)-methyl-N(3)-[(3S)-3-amino-3-carboxypropyl]pseudouridine in rRNA + S-methyl-5'-thioadenosine + H(+). It carries out the reaction N(1)-methylpseudouridine(1191) in yeast 18S rRNA + S-adenosyl-L-methionine = N(1)-methyl-N(3)-[(3S)-3-amino-3-carboxypropyl]pseudouridine(1191) in yeast 18S rRNA + S-methyl-5'-thioadenosine + H(+). Its function is as follows. Aminocarboxypropyltransferase that catalyzes the aminocarboxypropyl transfer on pseudouridine at position 1191 (Psi1191) in 18S rRNA. It constitutes the last step in biosynthesis of the hypermodified N1-methyl-N3-(3-amino-3-carboxypropyl) pseudouridine (m1acp3-Psi) conserved in eukaryotic 18S rRNA. Required for processing 35S pre-rRNA at site D. This chain is 18S rRNA aminocarboxypropyltransferase, found in Schizosaccharomyces pombe (strain 972 / ATCC 24843) (Fission yeast).